The sequence spans 185 residues: GTP cyclohydrolase 1 (185 aa).

Zn(2+) is bound by residues Cys-76, His-79, and Cys-147.

The protein belongs to the GTP cyclohydrolase I family. As to quaternary structure, toroid-shaped homodecamer, composed of two pentamers of five dimers.

It catalyses the reaction GTP + H2O = 7,8-dihydroneopterin 3'-triphosphate + formate + H(+). It functions in the pathway cofactor biosynthesis; 7,8-dihydroneopterin triphosphate biosynthesis; 7,8-dihydroneopterin triphosphate from GTP: step 1/1. This Clostridium perfringens (strain 13 / Type A) protein is GTP cyclohydrolase 1.